The following is a 361-amino-acid chain: uncharacterized protein (361 aa).

The first 19 residues, 1-19 (MNLVICVLLLSIWKNNCMT), serve as a signal peptide directing secretion. Over 20-47 (TNQTNGSSTTGDKPVESMQTKLNYLRRN) the chain is Extracellular. Asn24 carries an N-linked (GlcNAc...) asparagine glycan. Residues 48–68 (LLILVGIIIMVFVFICFCYLH) traverse the membrane as a helical segment. Over 69 to 361 (YNCLSDDASK…QVTSEVTLND (293 aa)) the chain is Cytoplasmic. Residues 99–113 (AKTASQCSPETQPML) are compositionally biased toward polar residues. Disordered regions lie at residues 99–184 (AKTA…KAHK), 209–247 (PPQL…NPKR), and 295–316 (QNLH…LDSR). A compositionally biased stretch (low complexity) spans 114–133 (STADKSSDSSSPERASAQSS). Positions 141–150 (SSLQKPSIPN) are enriched in polar residues. Positions 299 to 308 (VSSKVKSSSR) are enriched in low complexity.

The protein localises to the membrane. This is an uncharacterized protein from Homo sapiens (Human).